Reading from the N-terminus, the 137-residue chain is Profilin-3 (137 aa).

Belongs to the profilin family. In terms of assembly, interacts with ACTRT3.

The protein localises to the cytoplasm. The protein resides in the cytoskeleton. Its subcellular location is the nucleus. Functionally, binds to actin and affects the structure of the cytoskeleton. Binds to poly-L-proline, phosphatidylinositol 3-phosphate (PtdIns(3)P), phosphatidylinositol 4,5-bisphosphate (PtdIns(4,5)P2) and phosphatidylinositol 4-phosphate (PtdIns(4)P). Slightly reduces actin polymerization. May be involved in spermatogenesis. In Bos taurus (Bovine), this protein is Profilin-3 (PFN3).